The chain runs to 615 residues: MVKLVCAIVGVAGSAFPVDIDASQLVGDLKKAIKAENAMTFTGDAKDLQLFLAKQPVDDESGKEVVPVYRPSAEEMKEESFKWLPDEHRAALKLVEGESDDYIHALTAGEPILGSKTLTTWFYTKNNMELPSSEQIHVLVVVPEQGSSVPTVSQDGVFDHCINPFFLQFRTVDKVGDWLEFSSLLPLTRRQKLYIRSSYQVIANHALFNPNVGMVKYAVVTGTPGVGKSVFVYYVLWRLIKEKKRVLLFDNNGLFYFDGSTMLICLALPSKFNEQFWSPDLWCLVDSMDPTSIPGLPYRLCSVLLASTPRRDCIGEFKKQPPTADVFYMPLWSKEELATIAPMYPHAAAVWENRFDCLGGVPRLVLQDIETDPQALLMSACSSCSLDDCIMLVSIYSEINSKTKIVQTLIHIHSQEPYRKYKVVYASDLAMQLIVRTKWRFDRAKLQSLLGSSDGNPLAQSLCGYIFEFYSMDRLEQGGTFVYRELFSGKRKRTPADGTIDIPRSSQPRQVAERVEVGQHAKQLYVPGTSNYTAIDAWMPQFGGFQMTVGKTHDIKGGAADDLAKLGQNGNRLFFLLPPLYYKTFTKKTPQTIKQYAILVPYPEVRNELSASTLQ.

The first 17 residues, 1–17 (MVKLVCAIVGVAGSAFP), serve as a signal peptide directing secretion. Residues 18-54 (VDIDASQLVGDLKKAIKAENAMTFTGDAKDLQLFLAK) are LQLFLAK domain. A DWL domain region spans residues 55 to 136 (QPVDDESGKE…NMELPSSEQI (82 aa)). An HVLVXXP motif motif is present at residues 137 to 143 (HVLVVVP). N-linked (GlcNAc...) asparagine glycosylation occurs at N531.

It belongs to the Crinkler effector family.

Its subcellular location is the secreted. The protein localises to the host nucleus. Functionally, secreted effector that elicits necrosis in host plants, a characteristic of plant innate immunity. This is Crinkler effector protein 15 from Phytophthora infestans (Potato late blight agent).